A 371-amino-acid chain; its full sequence is uncharacterized protein (371 aa).

H76 contributes to the Zn(2+) binding site. Residue D78 is part of the active site. D106 lines the Zn(2+) pocket. The Proton acceptor role is filled by E139. Zn(2+) is bound by residues E140, D163, and H344.

This sequence belongs to the peptidase M20A family. Zn(2+) serves as cofactor.

Could be a peptidase. This is an uncharacterized protein from Bacillus subtilis (strain 168).